We begin with the raw amino-acid sequence, 852 residues long: Bifunctional uridylyltransferase/uridylyl-removing enzyme (852 aa).

Positions 1-318 are uridylyltransferase; that stretch reads MPANLSSALE…SAPMRVTLRI (318 aa). Positions 319–672 are uridylyl-removing; the sequence is DDDYIQVNNQ…SRILFKSDSF (354 aa). In terms of domain architecture, HD spans 436 to 558; sequence VDDHILTVVR…VQTHERLSAL (123 aa). ACT domains lie at 673-757 and 785-852; these read QVMV…SHSR and SVEI…EQLS.

Belongs to the GlnD family. Mg(2+) serves as cofactor.

The catalysed reaction is [protein-PII]-L-tyrosine + UTP = [protein-PII]-uridylyl-L-tyrosine + diphosphate. It catalyses the reaction [protein-PII]-uridylyl-L-tyrosine + H2O = [protein-PII]-L-tyrosine + UMP + H(+). With respect to regulation, uridylyltransferase (UTase) activity is inhibited by glutamine, while glutamine activates uridylyl-removing (UR) activity. In terms of biological role, modifies, by uridylylation and deuridylylation, the PII regulatory proteins (GlnB and homologs), in response to the nitrogen status of the cell that GlnD senses through the glutamine level. Under low glutamine levels, catalyzes the conversion of the PII proteins and UTP to PII-UMP and PPi, while under higher glutamine levels, GlnD hydrolyzes PII-UMP to PII and UMP (deuridylylation). Thus, controls uridylylation state and activity of the PII proteins, and plays an important role in the regulation of nitrogen assimilation and metabolism. This is Bifunctional uridylyltransferase/uridylyl-removing enzyme from Neisseria meningitidis serogroup A / serotype 4A (strain DSM 15465 / Z2491).